Here is a 270-residue protein sequence, read N- to C-terminus: Imidazole glycerol phosphate synthase subunit HisF (270 aa).

Catalysis depends on residues aspartate 11 and aspartate 130.

Belongs to the HisA/HisF family. In terms of assembly, heterodimer of HisH and HisF.

It localises to the cytoplasm. It catalyses the reaction 5-[(5-phospho-1-deoxy-D-ribulos-1-ylimino)methylamino]-1-(5-phospho-beta-D-ribosyl)imidazole-4-carboxamide + L-glutamine = D-erythro-1-(imidazol-4-yl)glycerol 3-phosphate + 5-amino-1-(5-phospho-beta-D-ribosyl)imidazole-4-carboxamide + L-glutamate + H(+). Its pathway is amino-acid biosynthesis; L-histidine biosynthesis; L-histidine from 5-phospho-alpha-D-ribose 1-diphosphate: step 5/9. Its function is as follows. IGPS catalyzes the conversion of PRFAR and glutamine to IGP, AICAR and glutamate. The HisF subunit catalyzes the cyclization activity that produces IGP and AICAR from PRFAR using the ammonia provided by the HisH subunit. The sequence is that of Imidazole glycerol phosphate synthase subunit HisF from Sorangium cellulosum (strain So ce56) (Polyangium cellulosum (strain So ce56)).